A 1166-amino-acid chain; its full sequence is ATP-dependent helicase/deoxyribonuclease subunit B (1166 aa).

Residues 1–290 form the UvrD-like helicase ATP-binding domain; it reads MGMRFILGRS…DTLEGNFQNR (290 aa). An ATP-binding site is contributed by 8–15; sequence GRSGTNKS. Positions 283–588 constitute a UvrD-like helicase C-terminal domain; sequence LEGNFQNRPY…QFSHVPPSMD (306 aa). Residues C802, C1123, C1126, and C1132 each coordinate [4Fe-4S] cluster.

The protein belongs to the helicase family. AddB/RexB type 1 subfamily. As to quaternary structure, heterodimer of AddA and AddB. It depends on Mg(2+) as a cofactor. [4Fe-4S] cluster is required as a cofactor.

In terms of biological role, the heterodimer acts as both an ATP-dependent DNA helicase and an ATP-dependent, dual-direction single-stranded exonuclease. Recognizes the chi site generating a DNA molecule suitable for the initiation of homologous recombination. The AddB subunit has 5' -&gt; 3' nuclease activity but not helicase activity. The protein is ATP-dependent helicase/deoxyribonuclease subunit B of Oceanobacillus iheyensis (strain DSM 14371 / CIP 107618 / JCM 11309 / KCTC 3954 / HTE831).